We begin with the raw amino-acid sequence, 489 residues long: Putative (R)-citramalate synthase CimA (489 aa).

Residues 3 to 255 (VKILDTTLRD…KTKIKKERLY (253 aa)) enclose the Pyruvate carboxyltransferase domain.

This sequence belongs to the alpha-IPM synthase/homocitrate synthase family. In terms of assembly, homodimer.

The enzyme catalyses pyruvate + acetyl-CoA + H2O = (3R)-citramalate + CoA + H(+). It participates in amino-acid biosynthesis; L-isoleucine biosynthesis; 2-oxobutanoate from pyruvate: step 1/3. Catalyzes the condensation of pyruvate and acetyl-coenzyme A to form (R)-citramalate. The polypeptide is Putative (R)-citramalate synthase CimA (cimA) (Archaeoglobus fulgidus (strain ATCC 49558 / DSM 4304 / JCM 9628 / NBRC 100126 / VC-16)).